Here is a 319-residue protein sequence, read N- to C-terminus: Aspartate carbamoyltransferase catalytic subunit (319 aa).

Residues arginine 64 and threonine 65 each contribute to the carbamoyl phosphate site. Lysine 92 contacts L-aspartate. Arginine 114, histidine 142, and glutamine 145 together coordinate carbamoyl phosphate. L-aspartate-binding residues include arginine 175 and arginine 229. Carbamoyl phosphate-binding residues include glycine 270 and proline 271.

It belongs to the aspartate/ornithine carbamoyltransferase superfamily. ATCase family. Heterododecamer (2C3:3R2) of six catalytic PyrB chains organized as two trimers (C3), and six regulatory PyrI chains organized as three dimers (R2).

The catalysed reaction is carbamoyl phosphate + L-aspartate = N-carbamoyl-L-aspartate + phosphate + H(+). Its pathway is pyrimidine metabolism; UMP biosynthesis via de novo pathway; (S)-dihydroorotate from bicarbonate: step 2/3. In terms of biological role, catalyzes the condensation of carbamoyl phosphate and aspartate to form carbamoyl aspartate and inorganic phosphate, the committed step in the de novo pyrimidine nucleotide biosynthesis pathway. This is Aspartate carbamoyltransferase catalytic subunit from Rhodospirillum rubrum (strain ATCC 11170 / ATH 1.1.1 / DSM 467 / LMG 4362 / NCIMB 8255 / S1).